The following is a 144-amino-acid chain: Large ribosomal subunit protein uL15 (144 aa).

The disordered stretch occupies residues 1–57 (MRFNELQPAKGSRFAGKRLGRGIGSGLGKTSGKGHKGQKARSGGYHKVGFEGGQMPL). Residues 21 to 31 (RGIGSGLGKTS) are compositionally biased toward gly residues.

This sequence belongs to the universal ribosomal protein uL15 family. As to quaternary structure, part of the 50S ribosomal subunit.

Functionally, binds to the 23S rRNA. The chain is Large ribosomal subunit protein uL15 from Dichelobacter nodosus (strain VCS1703A).